The following is a 707-amino-acid chain: Translation initiation factor eIF2B subunit epsilon (707 aa).

2 disordered regions span residues 489 to 526 (HDDI…SVKF) and 686 to 707 (AEEE…DESD). Residues 516 to 693 (DNPIEPDSVK…KSAEEESDDS (178 aa)) enclose the W2 domain. Residues 688 to 707 (EESDDSDDSDDDDDDSDESD) are compositionally biased toward acidic residues.

This sequence belongs to the eIF-2B gamma/epsilon subunits family. Component of the translation initiation factor 2B (eIF2B) complex which is a heterodecamer of two sets of five different subunits: alpha, beta, gamma, delta and epsilon. Subunits alpha, beta and delta comprise a regulatory subcomplex and subunits epsilon and gamma comprise a catalytic subcomplex. Within the complex, the hexameric regulatory complex resides at the center, with the two heterodimeric catalytic subcomplexes bound on opposite sides.

The protein resides in the cytoplasm. The protein localises to the cytosol. In terms of biological role, acts as a component of the translation initiation factor 2B (eIF2B) complex, which catalyzes the exchange of GDP for GTP on eukaryotic initiation factor 2 (eIF2) gamma subunit. Its guanine nucleotide exchange factor activity is repressed when bound to eIF2 complex phosphorylated on the alpha subunit, thereby limiting the amount of methionyl-initiator methionine tRNA available to the ribosome and consequently global translation is repressed. The protein is Translation initiation factor eIF2B subunit epsilon (eif2b5) of Dictyostelium discoideum (Social amoeba).